The chain runs to 267 residues: 4-hydroxy-tetrahydrodipicolinate reductase (267 aa).

NAD(+) contacts are provided by residues G9–M14 and D35. R36 is a binding site for NADP(+). Residues G99–T101 and A123–Y126 each bind NAD(+). H156 serves as the catalytic Proton donor/acceptor. Residue H157 participates in (S)-2,3,4,5-tetrahydrodipicolinate binding. Residue K160 is the Proton donor of the active site. G166–T167 serves as a coordination point for (S)-2,3,4,5-tetrahydrodipicolinate.

Belongs to the DapB family.

It localises to the cytoplasm. The enzyme catalyses (S)-2,3,4,5-tetrahydrodipicolinate + NAD(+) + H2O = (2S,4S)-4-hydroxy-2,3,4,5-tetrahydrodipicolinate + NADH + H(+). It carries out the reaction (S)-2,3,4,5-tetrahydrodipicolinate + NADP(+) + H2O = (2S,4S)-4-hydroxy-2,3,4,5-tetrahydrodipicolinate + NADPH + H(+). It participates in amino-acid biosynthesis; L-lysine biosynthesis via DAP pathway; (S)-tetrahydrodipicolinate from L-aspartate: step 4/4. Functionally, catalyzes the conversion of 4-hydroxy-tetrahydrodipicolinate (HTPA) to tetrahydrodipicolinate. This chain is 4-hydroxy-tetrahydrodipicolinate reductase, found in Halorhodospira halophila (strain DSM 244 / SL1) (Ectothiorhodospira halophila (strain DSM 244 / SL1)).